The sequence spans 142 residues: 3-hydroxyacyl-[acyl-carrier-protein] dehydratase FabZ (142 aa).

The active site involves H48.

The protein belongs to the thioester dehydratase family. FabZ subfamily.

The protein localises to the cytoplasm. It carries out the reaction a (3R)-hydroxyacyl-[ACP] = a (2E)-enoyl-[ACP] + H2O. In terms of biological role, involved in unsaturated fatty acids biosynthesis. Catalyzes the dehydration of short chain beta-hydroxyacyl-ACPs and long chain saturated and unsaturated beta-hydroxyacyl-ACPs. This Prochlorococcus marinus (strain MIT 9313) protein is 3-hydroxyacyl-[acyl-carrier-protein] dehydratase FabZ.